The chain runs to 178 residues: ATP synthase subunit delta (178 aa).

This sequence belongs to the ATPase delta chain family. As to quaternary structure, F-type ATPases have 2 components, F(1) - the catalytic core - and F(0) - the membrane proton channel. F(1) has five subunits: alpha(3), beta(3), gamma(1), delta(1), epsilon(1). F(0) has three main subunits: a(1), b(2) and c(10-14). The alpha and beta chains form an alternating ring which encloses part of the gamma chain. F(1) is attached to F(0) by a central stalk formed by the gamma and epsilon chains, while a peripheral stalk is formed by the delta and b chains.

The protein localises to the cell membrane. Functionally, f(1)F(0) ATP synthase produces ATP from ADP in the presence of a proton or sodium gradient. F-type ATPases consist of two structural domains, F(1) containing the extramembraneous catalytic core and F(0) containing the membrane proton channel, linked together by a central stalk and a peripheral stalk. During catalysis, ATP synthesis in the catalytic domain of F(1) is coupled via a rotary mechanism of the central stalk subunits to proton translocation. In terms of biological role, this protein is part of the stalk that links CF(0) to CF(1). It either transmits conformational changes from CF(0) to CF(1) or is implicated in proton conduction. The protein is ATP synthase subunit delta of Streptococcus equi subsp. zooepidemicus (strain MGCS10565).